The chain runs to 648 residues: Actin-related protein 5 (648 aa).

The segment at 34-59 is disordered; it reads LTKPRKDRKKEAAASEGSASQTTVEQ. Coiled coils occupy residues 277–311 and 340–364; these read TAEQKQEKRRELAHRLLDIKKNREQEKLREDEQQL and TLEDLDSLIATINSRIKRAQERAQS. 2 disordered regions span residues 357-385 and 403-455; these read RAQERAQSGPRPSKQQERLNKMPKPPEGM and GRKQ…GMND. The span at 414–428 shows a compositional bias: basic and acidic residues; that stretch reads EQAKRHTHAAQERMR. Phosphoserine occurs at positions 471 and 473.

Belongs to the actin family. ARP5 subfamily. Component of the chromatin remodeling Ino80 complex.

It is found in the nucleus. In terms of biological role, proposed core component of the chromatin remodeling Ino80 complex which is involved in transcriptional regulation, DNA replication and probably DNA repair. The polypeptide is Actin-related protein 5 (Drosophila melanogaster (Fruit fly)).